Here is a 288-residue protein sequence, read N- to C-terminus: Pyrroline-5-carboxylate reductase 3 (288 aa).

This sequence belongs to the pyrroline-5-carboxylate reductase family. Homodecamer; composed of 5 homodimers.

It localises to the cytoplasm. It carries out the reaction L-proline + NADP(+) = (S)-1-pyrroline-5-carboxylate + NADPH + 2 H(+). The enzyme catalyses L-proline + NAD(+) = (S)-1-pyrroline-5-carboxylate + NADH + 2 H(+). The protein operates within amino-acid biosynthesis; L-proline biosynthesis; L-proline from L-glutamate 5-semialdehyde: step 1/1. Its function is as follows. Oxidoreductase that catalyzes the last step in proline biosynthesis, which corresponds to the reduction of pyrroline-5-carboxylate (P5C) to L-proline using NAD(P)H. Proline is synthesized from either glutamate or ornithine; both are converted to P5C, and then to proline via pyrroline-5-carboxylate reductases (PYCRs). PYCR3 is exclusively linked to the biosynthesis of proline from ornithine. The polypeptide is Pyrroline-5-carboxylate reductase 3 (Danio rerio (Zebrafish)).